Here is a 227-residue protein sequence, read N- to C-terminus: Cytochrome c oxidase subunit 2 (227 aa).

Over 1–14 (MAYPFQLGLQDATS) the chain is Mitochondrial intermembrane. A helical membrane pass occupies residues 15–45 (PIMEELMNFHDHTLMIVFLISSLVLYIISLM). Over 46–59 (LTTKLTHTSTMDAQ) the chain is Mitochondrial matrix. Residues 60 to 87 (EVETIWTILPAVILILIALPSLRILYMM) traverse the membrane as a helical segment. Residues 88–227 (DEINNPVLTV…NFENWSASMI (140 aa)) are Mitochondrial intermembrane-facing. Cu cation contacts are provided by His161, Cys196, Glu198, Cys200, His204, and Met207. Glu198 contributes to the Mg(2+) binding site.

Belongs to the cytochrome c oxidase subunit 2 family. In terms of assembly, component of the cytochrome c oxidase (complex IV, CIV), a multisubunit enzyme composed of 14 subunits. The complex is composed of a catalytic core of 3 subunits MT-CO1, MT-CO2 and MT-CO3, encoded in the mitochondrial DNA, and 11 supernumerary subunits COX4I, COX5A, COX5B, COX6A, COX6B, COX6C, COX7A, COX7B, COX7C, COX8 and NDUFA4, which are encoded in the nuclear genome. The complex exists as a monomer or a dimer and forms supercomplexes (SCs) in the inner mitochondrial membrane with NADH-ubiquinone oxidoreductase (complex I, CI) and ubiquinol-cytochrome c oxidoreductase (cytochrome b-c1 complex, complex III, CIII), resulting in different assemblies (supercomplex SCI(1)III(2)IV(1) and megacomplex MCI(2)III(2)IV(2)). Found in a complex with TMEM177, COA6, COX18, COX20, SCO1 and SCO2. Interacts with TMEM177 in a COX20-dependent manner. Interacts with COX20. Interacts with COX16. It depends on Cu cation as a cofactor.

The protein resides in the mitochondrion inner membrane. It catalyses the reaction 4 Fe(II)-[cytochrome c] + O2 + 8 H(+)(in) = 4 Fe(III)-[cytochrome c] + 2 H2O + 4 H(+)(out). Functionally, component of the cytochrome c oxidase, the last enzyme in the mitochondrial electron transport chain which drives oxidative phosphorylation. The respiratory chain contains 3 multisubunit complexes succinate dehydrogenase (complex II, CII), ubiquinol-cytochrome c oxidoreductase (cytochrome b-c1 complex, complex III, CIII) and cytochrome c oxidase (complex IV, CIV), that cooperate to transfer electrons derived from NADH and succinate to molecular oxygen, creating an electrochemical gradient over the inner membrane that drives transmembrane transport and the ATP synthase. Cytochrome c oxidase is the component of the respiratory chain that catalyzes the reduction of oxygen to water. Electrons originating from reduced cytochrome c in the intermembrane space (IMS) are transferred via the dinuclear copper A center (CU(A)) of subunit 2 and heme A of subunit 1 to the active site in subunit 1, a binuclear center (BNC) formed by heme A3 and copper B (CU(B)). The BNC reduces molecular oxygen to 2 water molecules using 4 electrons from cytochrome c in the IMS and 4 protons from the mitochondrial matrix. This chain is Cytochrome c oxidase subunit 2 (MT-CO2), found in Maxomys bartelsii (Bartels's Javan maxomys).